Consider the following 388-residue polypeptide: MSLLYGLLILAFTRSCLVVGQCSINIPDDLKGEEAPVILVKTGNNVKLFRPEEKTTTFPKGTELLLACTGEGNGLKSNGQETTTLSCNGNQFESAAKEKLKDMSCKSMAKAVVEQTTKRCMGNDFNLYEAGYKVNGKFYGSVYDICYNGKGQSSGYTHNFIYGRTWKYKLPEKPYEHYSSRDPQAGKDLDKLYKEQKERFKNTKVNGKPLLDDEHYFTEGQLTPDTSIITGADKLSTYDYANIAPLFKDIYDGNIWRYENMTQELADQRQATFEEYTGGFYSYEVEKWKPIGLDNAEFPTHRVPKYIYKLVVDTESKDGIVFVTLNDPYHKSPASENLCKDICSEANINEPDFKNVEKGYTICCSYGDFGNRIRTLPKDIHVKGLLKY.

Residues 1 to 18 (MSLLYGLLILAFTRSCLV) form the signal peptide. N-linked (GlcNAc...) asparagine glycosylation is present at asparagine 260.

It belongs to the DNA/RNA non-specific endonuclease family. A divalent metal cation is required as a cofactor. As to expression, saliva (at protein level).

The protein resides in the secreted. Its function is as follows. Binds double-stranded DNA (dsDNA) with high affinity. Binds double-stranded RNA. Binds single-stranded DNA with lower affinity and with a preference for purine-rich sequences. Shows residual nuclease activity for dsDNA. Facilitates blood meal intake by lowering the local viscosity created by the release of host DNA. This chain is Salivary protein Tsal2A, found in Glossina morsitans morsitans (Savannah tsetse fly).